A 374-amino-acid chain; its full sequence is UPF0496 protein At3g28270 (374 aa).

The stretch at 171–210 forms a coiled coil; the sequence is KVLTTQFERIKKQQESLLEEVSETRKKIQDEISNLEKKTL. The next 2 membrane-spanning stretches (helical) occupy residues 214–234 and 235–255; these read VVFG…IATG and VGAA…GWAG. The stretch at 256–321 forms a coiled coil; it reads VYTTLDKKKD…MLKLVDNAID (66 aa).

It belongs to the UPF0496 family.

Its subcellular location is the membrane. This Arabidopsis thaliana (Mouse-ear cress) protein is UPF0496 protein At3g28270.